We begin with the raw amino-acid sequence, 870 residues long: Ribonucleoside-diphosphate reductase large subunit (870 aa).

One can recognise an ATP-cone domain in the interval 16–110 (MYVVKRDGTK…VSNLHKQTSK (95 aa)). Residues 20-21 (KR), 26-32 (ENVSFDK), Thr-71, and Asp-75 contribute to the ATP site. Ser-235 lines the GDP pocket. A disulfide bridge links Cys-236 with Cys-463. Residues 244–246 (DSI), Lys-261, Arg-274, and 281–282 (RG) contribute to the dTTP site. Asn-446 is a GDP binding site. Asn-446 (proton acceptor) is an active-site residue. Cys-448 functions as the Cysteine radical intermediate in the catalytic mechanism. GDP contacts are provided by residues Glu-450 and 632 to 635 (TAST). Glu-450 acts as the Proton acceptor in catalysis. The interval 789-854 (KPVENNINST…NNNEDDLANY (66 aa)) is disordered. The span at 796-811 (NSTTPLKTPTKTPNSS) shows a compositional bias: low complexity. Polar residues predominate over residues 812–831 (NRISTSPTNNLTSPIRFNIT). The segment covering 832–844 (QQQQQQQQQQQQQ) has biased composition (low complexity).

It belongs to the ribonucleoside diphosphate reductase large chain family. Heterodimer of a large and a small subunit.

It is found in the cytoplasm. It catalyses the reaction a 2'-deoxyribonucleoside 5'-diphosphate + [thioredoxin]-disulfide + H2O = a ribonucleoside 5'-diphosphate + [thioredoxin]-dithiol. Under complex allosteric control mediated by deoxynucleoside triphosphates and ATP binding to separate specificity and activation sites on the large subunit. The type of nucleotide bound at the specificity site determines substrate preference. It seems probable that ATP makes the enzyme reduce CDP and UDP, dGTP favors ADP reduction and dTTP favors GDP reduction. Stimulated by ATP and inhibited by dATP binding to the activity site. Its function is as follows. Provides the precursors necessary for DNA synthesis. Catalyzes the biosynthesis of deoxyribonucleotides from the corresponding ribonucleotides. The protein is Ribonucleoside-diphosphate reductase large subunit (rnrA) of Dictyostelium discoideum (Social amoeba).